Consider the following 1256-residue polypeptide: Protein flightless-1 (1256 aa).

LRR repeat units follow at residues 4 to 28, 29 to 51, 52 to 74, 75 to 99, 100 to 122, 124 to 145, 147 to 169, 171 to 192, 218 to 241, 243 to 264, 265 to 287, 289 to 312, 313 to 335, 336 to 358, and 360 to 381; these read LPFV…MRQM, SRVQ…LGHL, QKLE…LTEL, SCLR…LFHL, EELT…LERA, NLIV…LFIH, TDLL…TRRL, NLKT…QLPS, LANL…VYNV, TLVR…VELW, QRLE…LCKL, KLRR…IGKL, GALE…LCRC, GALK…IHLL, and GLDQ…PSEA. Positions 405–476 are disordered; it reads AAVPPSMPSS…ESLKPKRWDE (72 aa). Residues 431–476 are compositionally biased toward basic and acidic residues; the sequence is PRSEGDQDAAKVLKGMKDVAKDKDNEAGAVPEDGKPESLKPKRWDE. Gelsolin-like repeat units lie at residues 512–589, 633–703, 749–822, and 1168–1242; these read IEEV…EQFL, EPVA…AEFW, VELP…MQIF, and EKCA…SRRF.

It belongs to the villin/gelsolin family. Found in ovaries, larval fat bodies, brain and adult thorax.

In terms of biological role, may play a key role in embryonic cellularization by interacting with both the cytoskeleton and other cellular components. Alternatively, it may play a structural role in indirect flight muscle. Vital for embryonic development. This Drosophila melanogaster (Fruit fly) protein is Protein flightless-1 (fliI).